A 141-amino-acid polypeptide reads, in one-letter code: Regulator of ribonuclease activity B (141 aa).

Over residues Asp-119–Asp-132 the composition is skewed to acidic residues. A disordered region spans residues Asp-119–His-141.

Belongs to the RraB family. As to quaternary structure, interacts with the C-terminal region of Rne.

It is found in the cytoplasm. Functionally, globally modulates RNA abundance by binding to RNase E (Rne) and regulating its endonucleolytic activity. Can modulate Rne action in a substrate-dependent manner by altering the composition of the degradosome. This is Regulator of ribonuclease activity B from Shewanella amazonensis (strain ATCC BAA-1098 / SB2B).